The sequence spans 232 residues: MSILQSVHNSFAPIHKEGYPFIIAFFVISLILGWVWSPLFWCGLVLTVWCIYFFRDPERVIPLNPNWIISPADGRISFVGPCIPPEELGLGNAEMIRISVFMDIFSCHINRVPISGKVESIIYHPGQFANAELDKASQFNERNGVVIDSKHGKIGVVQIAGAIARRIVCWSQEDDSVVTGQRFGLIRFGSRLDIYIPNEVKLRVTVGQTSIAGETVLGSFDDKSATTEFRFD.

S190 serves as the catalytic Schiff-base intermediate with substrate; via pyruvic acid. S190 bears the Pyruvic acid (Ser); by autocatalysis mark.

It belongs to the phosphatidylserine decarboxylase family. PSD-A subfamily. As to quaternary structure, heterodimer of a large membrane-associated beta subunit and a small pyruvoyl-containing alpha subunit. The cofactor is pyruvate. Is synthesized initially as an inactive proenzyme. Formation of the active enzyme involves a self-maturation process in which the active site pyruvoyl group is generated from an internal serine residue via an autocatalytic post-translational modification. Two non-identical subunits are generated from the proenzyme in this reaction, and the pyruvate is formed at the N-terminus of the alpha chain, which is derived from the carboxyl end of the proenzyme. The post-translation cleavage follows an unusual pathway, termed non-hydrolytic serinolysis, in which the side chain hydroxyl group of the serine supplies its oxygen atom to form the C-terminus of the beta chain, while the remainder of the serine residue undergoes an oxidative deamination to produce ammonia and the pyruvoyl prosthetic group on the alpha chain.

The protein localises to the cell membrane. It carries out the reaction a 1,2-diacyl-sn-glycero-3-phospho-L-serine + H(+) = a 1,2-diacyl-sn-glycero-3-phosphoethanolamine + CO2. The protein operates within phospholipid metabolism; phosphatidylethanolamine biosynthesis; phosphatidylethanolamine from CDP-diacylglycerol: step 2/2. Catalyzes the formation of phosphatidylethanolamine (PtdEtn) from phosphatidylserine (PtdSer). The protein is Phosphatidylserine decarboxylase proenzyme of Bartonella henselae (strain ATCC 49882 / DSM 28221 / CCUG 30454 / Houston 1) (Rochalimaea henselae).